The sequence spans 124 residues: Small ribosomal subunit protein uS12 (124 aa).

At Asp-89 the chain carries 3-methylthioaspartic acid.

This sequence belongs to the universal ribosomal protein uS12 family. Part of the 30S ribosomal subunit. Contacts proteins S8 and S17. May interact with IF1 in the 30S initiation complex.

In terms of biological role, with S4 and S5 plays an important role in translational accuracy. Its function is as follows. Interacts with and stabilizes bases of the 16S rRNA that are involved in tRNA selection in the A site and with the mRNA backbone. Located at the interface of the 30S and 50S subunits, it traverses the body of the 30S subunit contacting proteins on the other side and probably holding the rRNA structure together. The combined cluster of proteins S8, S12 and S17 appears to hold together the shoulder and platform of the 30S subunit. The protein is Small ribosomal subunit protein uS12 of Shewanella piezotolerans (strain WP3 / JCM 13877).